The primary structure comprises 229 residues: Large ribosomal subunit protein uL1 (229 aa).

Belongs to the universal ribosomal protein uL1 family. In terms of assembly, part of the 50S ribosomal subunit.

Functionally, binds directly to 23S rRNA. The L1 stalk is quite mobile in the ribosome, and is involved in E site tRNA release. Its function is as follows. Protein L1 is also a translational repressor protein, it controls the translation of the L11 operon by binding to its mRNA. The sequence is that of Large ribosomal subunit protein uL1 from Clostridium kluyveri (strain ATCC 8527 / DSM 555 / NBRC 12016 / NCIMB 10680 / K1).